Here is a 180-residue protein sequence, read N- to C-terminus: Kappa-casein (180 aa).

The signal sequence occupies residues 1–21 (MMKHFLLVVNILAVTLPFLAA). O-linked (GalNAc...) threonine glycans are attached at residues T132, T142, T147, and T153. A Phosphoserine; alternate modification is found at S160. S160 carries O-linked (GalNAc...) serine; alternate glycosylation.

The protein belongs to the kappa-casein family. As to expression, mammary gland specific. Secreted in milk.

Its subcellular location is the secreted. Its function is as follows. Kappa-casein stabilizes micelle formation, preventing casein precipitation in milk. The sequence is that of Kappa-casein (CSN3) from Oryctolagus cuniculus (Rabbit).